Reading from the N-terminus, the 277-residue chain is (-)-trans-carveol dehydrogenase (277 aa).

10–32 is an NAD(+) binding site; it reads LITGAARGQGRSHAIKLAEEGAD. A substrate-binding site is contributed by S156. Y169 serves as the catalytic Proton acceptor.

It belongs to the short-chain dehydrogenases/reductases (SDR) family. Homotetramer.

The catalysed reaction is (1S,5R)-carveol + NAD(+) = (R)-carvone + NADH + H(+). It carries out the reaction (1S,5S)-carveol + NAD(+) = (S)-carvone + NADH + H(+). It functions in the pathway terpene metabolism; limonene degradation. Its activity is regulated as follows. Competitively inhibited by the product (S)- or (R)-carvone. Its function is as follows. Catalyzes the oxidation of carveol to carvone, with a strong stereoselectivity since it efficiently converts only the (6S)-stereoisomers, of which (-)-(4R,6S)-trans-carveol is the better substrate. Displays a broad substrate specificity with a preference for substituted cyclohexanols, and does not catalyze the oxidation of primary or short chain aliphatic secondary alcohols. Is also able, albeit more slowly, to oxidize limonene-1,2-diol into 1-hydroxy-2-oxolimonene. In Rhodococcus erythropolis (Arthrobacter picolinophilus), this protein is (-)-trans-carveol dehydrogenase (limC).